A 457-amino-acid polypeptide reads, in one-letter code: Autophagy-related protein 14 (457 aa).

A coiled-coil region spans residues 31–109; sequence RIENVMALIE…TRRAALSRRK (79 aa). 3 disordered regions span residues 54–73, 252–274, and 433–457; these read ETNAPTKDRKDALQAQQRTA, PSQASVSSPSSTTDTESQRVSRP, and NKNLLMGDKSSPRRGTSGWMRVKNR. Residues 253–266 are compositionally biased toward low complexity; that stretch reads SQASVSSPSSTTDT.

Belongs to the ATG14 family. As to quaternary structure, component of the autophagy-specific VPS34 PI3-kinase complex I.

The protein localises to the preautophagosomal structure membrane. The protein resides in the vacuole membrane. In terms of biological role, required for cytoplasm to vacuole transport (Cvt) and autophagy as a part of the autophagy-specific VPS34 PI3-kinase complex I. This complex is essential to recruit the ATG8-phosphatidylinositol conjugate and the ATG12-ATG5 conjugate to the pre-autophagosomal structure. ATG14 mediates the specific binding of the VPS34 PI3-kinase complex I to the preautophagosomal structure (PAS). Autophagy is required for proper vegetative growth, asexual/sexual reproduction, and full virulence. Autophagy is particularly involved in the biosynthesis of deoxynivalenol (DON), an important virulence determinant. The polypeptide is Autophagy-related protein 14 (Gibberella zeae (strain ATCC MYA-4620 / CBS 123657 / FGSC 9075 / NRRL 31084 / PH-1) (Wheat head blight fungus)).